Consider the following 98-residue polypeptide: Small ribosomal subunit protein uS19 (98 aa).

The disordered stretch occupies residues 77-98 (TRTYRGHAGGKAEKGGAAPKRK).

It belongs to the universal ribosomal protein uS19 family.

Its function is as follows. Protein S19 forms a complex with S13 that binds strongly to the 16S ribosomal RNA. The protein is Small ribosomal subunit protein uS19 of Chlorobium phaeovibrioides (strain DSM 265 / 1930) (Prosthecochloris vibrioformis (strain DSM 265)).